A 705-amino-acid chain; its full sequence is tRNA 5-methylaminomethyl-2-thiouridine biosynthesis bifunctional protein MnmC (705 aa).

The interval 1–241 (MTIKTADIQF…KREMLAGIIA (241 aa)) is tRNA (mnm(5)s(2)U34)-methyltransferase. The segment at 289–705 (IGAGIAGASM…LIRQLIRREV (417 aa)) is FAD-dependent cmnm(5)s(2)U34 oxidoreductase.

The protein in the N-terminal section; belongs to the methyltransferase superfamily. tRNA (mnm(5)s(2)U34)-methyltransferase family. This sequence in the C-terminal section; belongs to the DAO family. The cofactor is FAD.

Its subcellular location is the cytoplasm. The catalysed reaction is 5-aminomethyl-2-thiouridine(34) in tRNA + S-adenosyl-L-methionine = 5-methylaminomethyl-2-thiouridine(34) in tRNA + S-adenosyl-L-homocysteine + H(+). Functionally, catalyzes the last two steps in the biosynthesis of 5-methylaminomethyl-2-thiouridine (mnm(5)s(2)U) at the wobble position (U34) in tRNA. Catalyzes the FAD-dependent demodification of cmnm(5)s(2)U34 to nm(5)s(2)U34, followed by the transfer of a methyl group from S-adenosyl-L-methionine to nm(5)s(2)U34, to form mnm(5)s(2)U34. The chain is tRNA 5-methylaminomethyl-2-thiouridine biosynthesis bifunctional protein MnmC from Pseudoalteromonas atlantica (strain T6c / ATCC BAA-1087).